We begin with the raw amino-acid sequence, 75 residues long: Small ribosomal subunit protein bS18 (75 aa).

This sequence belongs to the bacterial ribosomal protein bS18 family. Part of the 30S ribosomal subunit. Forms a tight heterodimer with protein bS6.

In terms of biological role, binds as a heterodimer with protein bS6 to the central domain of the 16S rRNA, where it helps stabilize the platform of the 30S subunit. This chain is Small ribosomal subunit protein bS18, found in Buchnera aphidicola subsp. Cinara cedri (strain Cc).